Reading from the N-terminus, the 134-residue chain is Large ribosomal subunit protein bL17 (134 aa).

The protein belongs to the bacterial ribosomal protein bL17 family. In terms of assembly, part of the 50S ribosomal subunit. Contacts protein L32.

The polypeptide is Large ribosomal subunit protein bL17 (Thioalkalivibrio sulfidiphilus (strain HL-EbGR7)).